The following is a 207-amino-acid chain: Urease accessory protein UreE (207 aa).

The segment covering 170 to 194 (EHHGHSHSHSHDHDHDHDHDHDHQH) has biased composition (basic and acidic residues). Residues 170–207 (EHHGHSHSHSHDHDHDHDHDHDHQHGPCCSHGHHHGHR) are disordered.

The protein belongs to the UreE family.

Its subcellular location is the cytoplasm. Involved in urease metallocenter assembly. Binds nickel. Probably functions as a nickel donor during metallocenter assembly. In Burkholderia pseudomallei (strain 1106a), this protein is Urease accessory protein UreE.